A 798-amino-acid polypeptide reads, in one-letter code: RNA cytosine-C(5)-methyltransferase NSUN2 (798 aa).

Residues 1 to 13 show a composition bias toward basic residues; that stretch reads MGRRNRRNRQRHQ. Residues 1–30 are disordered; that stretch reads MGRRNRRNRQRHQRSTEQRSPAEEEQRRKA. Over residues 14 to 30 the composition is skewed to basic and acidic residues; it reads RSTEQRSPAEEEQRRKA. S-adenosyl-L-methionine contacts are provided by residues 186-192, Asp-217, Asp-244, and Asp-270; that span reads CAAPGSK. The active-site Nucleophile is the Cys-323. Disordered stretches follow at residues 476–499 and 723–798; these read DEPA…SSKT and KACD…ESVD. Basic and acidic residues predominate over residues 723 to 747; it reads KACDEEHIDEKMDIDGAKEESKELS. Acidic residues predominate over residues 751–762; it reads SGDDEDPKEEDV. Over residues 763–772 the composition is skewed to basic and acidic residues; that stretch reads IDRGVLEHVA.

Belongs to the class I-like SAM-binding methyltransferase superfamily. RsmB/NOP family. TRM4 subfamily.

Its subcellular location is the nucleus. The protein resides in the nucleolus. It is found in the cytoplasm. The protein localises to the mitochondrion. It localises to the cytoskeleton. Its subcellular location is the spindle. The protein resides in the secreted. It is found in the extracellular exosome. It carries out the reaction cytidine(48) in tRNA + S-adenosyl-L-methionine = 5-methylcytidine(48) in tRNA + S-adenosyl-L-homocysteine + H(+). The enzyme catalyses cytidine(49) in tRNA + S-adenosyl-L-methionine = 5-methylcytidine(49) in tRNA + S-adenosyl-L-homocysteine + H(+). It catalyses the reaction cytidine(50) in tRNA + S-adenosyl-L-methionine = 5-methylcytidine(50) in tRNA + S-adenosyl-L-homocysteine + H(+). The catalysed reaction is cytidine(34) in tRNA precursor + S-adenosyl-L-methionine = 5-methylcytidine(34) in tRNA precursor + S-adenosyl-L-homocysteine + H(+). It carries out the reaction a cytidine in mRNA + S-adenosyl-L-methionine = a 5-methylcytidine in mRNA + S-adenosyl-L-homocysteine + H(+). Functionally, RNA cytosine C(5)-methyltransferase that methylates cytosine to 5-methylcytosine (m5C) in various RNAs, such as tRNAs, mRNAs and some long non-coding RNAs (lncRNAs). Involved in various processes, such as epidermal stem cell differentiation, testis differentiation and maternal to zygotic transition during early development: acts by increasing protein synthesis; cytosine C(5)-methylation promoting tRNA stability and preventing mRNA decay. Methylates cytosine to 5-methylcytosine (m5C) at positions 34 and 48 of intron-containing tRNA(Leu)(CAA) precursors, and at positions 48, 49 and 50 of tRNA(Gly)(GCC) precursors. tRNA methylation is required generation of RNA fragments derived from tRNAs (tRFs). Also mediates C(5)-methylation of mitochondrial tRNAs. Catalyzes cytosine C(5)-methylation of mRNAs, leading to stabilize them and prevent mRNA decay. Cytosine C(5)-methylation of mRNAs also regulates mRNA export. Also mediates cytosine C(5)-methylation of non-coding RNAs, such as vault RNAs (vtRNAs), promoting their processing into regulatory small RNAs. Required for proper spindle assembly and chromosome segregation, independently of its methyltransferase activity. The chain is RNA cytosine-C(5)-methyltransferase NSUN2 from Xenopus tropicalis (Western clawed frog).